A 563-amino-acid chain; its full sequence is MLKAQSAAAGSLHQTLSQYSASIATDGSSSVTGSFKTDDSVNFITFNQDASCIAVGLNNGYKIFNCKPKFGKCYQIRKEESVGIIEMLYCTSLLAIVALGEEPGSSPRKLKIVNTKRQTTICDLIFPSTILQVKLTKSRLIVLLEEQIYIYDITTMKLLHTIETSPNSIGLCALSTTPDNDGNNYLAYPSPPKTITHDSLLASGINTNGGTNSVVNNISSVSNSPNRVGDVIMFNLNTLQPMSVIEAHKSALAAITLSSDGSLLATASDKGTIVRVFSVATGVKLFQFRRGTYSTKIYSLSFSSDNNYVVATSSSETVHIFRLGESEALENKHKKKKASTPKPTQPETIEEEDATLLQERPSQESTQDDDEFADDGDDSDEAVEGDDNDDESLEVISNKQRKLSQGSSNSFASFNSGTDDSSQAAKNEPLIDQNRLSVARLIRRSSQTLGRKAAQRMGDFLPSRFSSILEPTRHFASLKINAIGKDVKSIAVMNNELQEDLVPQAFLMRKDSDSYLSKEMLSLNLLHIYVVTSEGFFYTYGLDPERGGDCILLHQYSLIDESN.

3 WD repeats span residues 36–74, 247–287, and 292–331; these read KTDD…GKCY, AHKS…KLFQ, and TYST…ALEN. Positions 288–292 match the L/FRRG motif motif; it reads FRRGT. A disordered region spans residues 329–430; that stretch reads LENKHKKKKA…SSQAAKNEPL (102 aa). Over residues 366 to 393 the composition is skewed to acidic residues; that stretch reads TQDDDEFADDGDDSDEAVEGDDNDDESL. Over residues 404–417 the composition is skewed to low complexity; that stretch reads SQGSSNSFASFNSG.

Belongs to the WD repeat PROPPIN family. In terms of assembly, component of the PI(3,5)P2 regulatory complex.

It localises to the preautophagosomal structure membrane. The protein localises to the vacuole membrane. It is found in the endosome membrane. The PI(3,5)P2 regulatory complex regulates both the synthesis and turnover of phosphatidylinositol 3,5-bisphosphate (PtdIns(3,5)P2). Necessary for proper vacuole morphology. Plays an important role in osmotically-induced vacuole fragmentation. Required for cytoplasm to vacuole transport (Cvt) vesicle formation, pexophagy and starvation-induced autophagy. Involved in correct ATG9 trafficking to the pre-autophagosomal structure. Might also be involved in premeiotic DNA replication. The polypeptide is Autophagy-related protein 18 (ATG18) (Scheffersomyces stipitis (strain ATCC 58785 / CBS 6054 / NBRC 10063 / NRRL Y-11545) (Yeast)).